Consider the following 574-residue polypeptide: Ribonuclease Y (574 aa).

The helical transmembrane segment at Met-1–Leu-21 threads the bilayer. A KH domain is found at Ala-264–Leu-327. The region spanning Val-390 to Ala-483 is the HD domain.

The protein belongs to the RNase Y family.

The protein resides in the cell membrane. Its function is as follows. Endoribonuclease that initiates mRNA decay. The protein is Ribonuclease Y of Thermus thermophilus (strain ATCC BAA-163 / DSM 7039 / HB27).